The following is a 415-amino-acid chain: Glutamyl-tRNA reductase (415 aa).

Residues 49–52 (TCNR), S104, 109–111 (EPQ), and Q115 contribute to the substrate site. C50 serves as the catalytic Nucleophile. 184 to 189 (GAGEMI) provides a ligand contact to NADP(+).

Belongs to the glutamyl-tRNA reductase family. As to quaternary structure, homodimer.

It catalyses the reaction (S)-4-amino-5-oxopentanoate + tRNA(Glu) + NADP(+) = L-glutamyl-tRNA(Glu) + NADPH + H(+). It participates in porphyrin-containing compound metabolism; protoporphyrin-IX biosynthesis; 5-aminolevulinate from L-glutamyl-tRNA(Glu): step 1/2. Catalyzes the NADPH-dependent reduction of glutamyl-tRNA(Glu) to glutamate 1-semialdehyde (GSA). This is Glutamyl-tRNA reductase from Neisseria meningitidis serogroup B (strain ATCC BAA-335 / MC58).